A 655-amino-acid polypeptide reads, in one-letter code: Putative phagocytic receptor 1c (655 aa).

Residues 1-20 (MLNIIVVLLLLFFSNNVIDS) form the signal peptide. Residues 146–173 (SNSKSSEITSPPSSPSSSSSSSSSPSSS) show a composition bias toward low complexity. Residues 146 to 185 (SNSKSSEITSPPSSPSSSSSSSSSPSSSIEEEDDDDTEND) form a disordered region. The span at 174-183 (IEEEDDDDTE) shows a compositional bias: acidic residues. Helical transmembrane passes span 300–320 (IDII…AIIL), 359–379 (FSII…LMVF), 387–407 (IATP…TGIF), 428–448 (SVIT…IGYF), 461–481 (IGTV…CSLL), 518–538 (MILG…FFLS), 550–570 (LSFA…NMII), 587–607 (LLGP…FGIT), and 619–639 (FMFS…IGFL).

It belongs to the nonaspanin (TM9SF) (TC 9.A.2) family.

The protein localises to the membrane. The chain is Putative phagocytic receptor 1c (phg1c) from Dictyostelium discoideum (Social amoeba).